Here is a 268-residue protein sequence, read N- to C-terminus: WUSCHEL-related homeobox 11 (268 aa).

The tract at residues 1 to 35 (MDQEQTPHSPTRHSRSPPSSASGSTSAEPVRSRWS) is disordered. Residues 16-27 (SPPSSASGSTSA) show a composition bias toward low complexity. Residues 29 to 93 (PVRSRWSPKP…NRRSRSRRRQ (65 aa)) constitute a DNA-binding region (homeobox; WUS-type).

It belongs to the WUS homeobox family.

It localises to the nucleus. Transcription factor which may be involved in developmental processes. The sequence is that of WUSCHEL-related homeobox 11 (WOX11) from Arabidopsis thaliana (Mouse-ear cress).